A 639-amino-acid chain; its full sequence is MYLNLYKIDIPKKIKRLYFYNPDMEPKLFARNLSRVNNFKFQDSNDLVWIEIPDIDFQITPKNVFQYKVEKEEIIKEEEDKKLFVKTLYKYIKKLFLDNDFYFKKGNNFISNSEVFSLDSNENVNAHLTYKIKIHNISNEYYLSILPKFTFLSKEPALESAIKSGYLYNIKSGKSFPYISGLDGILKIDIGNNQIVEVAYPENYLFNFTTRDAEKYGFSKEVHEIYKNKVFEGFKKIPKTLGFLNKITNLNENYQLKDGYKIFINVIYKFKNGESRYAKDVFKYSFYKNEQPLKAIFFFSSKKQFFEVQKSLKELFHNKHSVFYRAAAELGFSKVEFLRDSKTKSSAFLYNPEEFTVKNTEFINQIEDNVMAIVLLDKYIGNIDPLVRNFPDNLILQPILKEKLEDIKPFIIKSYVYKMGNFIPECKPFILKKMEDKEKNLYIGIDLSHDTYARKTNLCIAAVDNTGDILYIGKHKNLELNEKMNLDILEKEYIKAFEKYIEKFNVSPENVFILRDGRFIEDIEIIKNFISYNDTKYTLVEVNKNTNINSYDDLKEWIIKLDENTYIYYPKTFLNQKGVEVKILENNTDYTIEEIIEQIYLLTRVAHSTPYTNYKLPYPLHIANKVALTDYEWKLYIPY.

The tract at residues 1-100 (MYLNLYKIDI…YIKKLFLDND (100 aa)) is N-terminal domain. A linker L1 region spans residues 101–153 (FYFKKGNNFISNSEVFSLDSNENVNAHLTYKIKIHNISNEYYLSILPKFTFLS). A PAZ domain region spans residues 154 to 209 (KEPALESAIKSGYLYNIKSGKSFPYISGLDGILKIDIGNNQIVEVAYPENYLFNFT). A linker L2 region spans residues 210-292 (TRDAEKYGFS…KYSFYKNEQP (83 aa)). Positions 293-424 (LKAIFFFSSK…YVYKMGNFIP (132 aa)) are mid domain. The PIWI domain stretch occupies residues 425–639 (ECKPFILKKM…DYEWKLYIPY (215 aa)). Residues Asp-446, Glu-482, Asp-516, and Asn-624 contribute to the active site. Asp-446 serves as a coordination point for Mn(2+). Mn(2+)-binding residues include Asp-516 and Asn-624.

The protein belongs to the argonaute family. Long pAgo subfamily. The cofactor is Mn(2+).

It localises to the cytoplasm. Functionally, an RNA-guided ssDNA endonuclease that may play a role in defense against invading mobile genetic elements. Uses short 5'-OH-ssRNA sequences as guides (gRNA) to bind complementary target DNA (tDNA) or target RNA resulting in target cleavage. The cleavage site is 10 nucleotides (nt) downstream of the target residue base-paired with the 5'-end of the gRNA. Reaction rates are fastest on 5'-OH-gRNA:tDNA followed by 5'-OH-gRNA:target RNA. gRNA between 17-21 nt supports equivalent rates of cleavage, has no preferred 5'-nt. Has weak activity on tDNA with 5'-phospho-gRNA, yielding products 1-2 nt longer. Unlike other characterized prokaryotic Ago proteins symmetric mismatches centered around the cleavage site reduce cleavage efficiency. In Marinitoga piezophila (strain DSM 14283 / JCM 11233 / KA3), this protein is Protein argonaute.